The primary structure comprises 196 residues: MTTVAIQTYFQELRDVVDRVGREKVDQIRQSVQLLTACLRCGGKVLIMGNGGSAADAQHFAAELVGRFLMERKALPSIALTTDTSILTAVGNDYGFDEIFKRQIEALADPRDVVIGLSTSGMSNNVFHALTAANQVGCKTIGLLGREGGSIASIVDVNLTVPEHHTPYIQTAHGAVLHLFCDLLEKELFTPSGQTE.

An SIS domain is found at 35-194; that stretch reads LTACLRCGGK…EKELFTPSGQ (160 aa). 50-52 is a substrate binding site; that stretch reads NGG. Zn(2+) contacts are provided by His59 and Glu63. Residues Glu63, 92–93, 118–120, Ser123, and Gln170 each bind substrate; these read ND and STS. Residues Gln170 and His178 each coordinate Zn(2+).

The protein belongs to the SIS family. GmhA subfamily. In terms of assembly, homotetramer. Requires Zn(2+) as cofactor.

The protein resides in the cytoplasm. The enzyme catalyses 2 D-sedoheptulose 7-phosphate = D-glycero-alpha-D-manno-heptose 7-phosphate + D-glycero-beta-D-manno-heptose 7-phosphate. Its pathway is carbohydrate biosynthesis; D-glycero-D-manno-heptose 7-phosphate biosynthesis; D-glycero-alpha-D-manno-heptose 7-phosphate and D-glycero-beta-D-manno-heptose 7-phosphate from sedoheptulose 7-phosphate: step 1/1. Its function is as follows. Catalyzes the isomerization of sedoheptulose 7-phosphate in D-glycero-D-manno-heptose 7-phosphate. The chain is Phosphoheptose isomerase from Syntrophotalea carbinolica (strain DSM 2380 / NBRC 103641 / GraBd1) (Pelobacter carbinolicus).